We begin with the raw amino-acid sequence, 307 residues long: UDP-N-acetylenolpyruvoylglucosamine reductase (307 aa).

One can recognise an FAD-binding PCMH-type domain in the interval 33-197 (TGGNADFYIT…LEAAFTLAPG (165 aa)). Arg176 is an active-site residue. Catalysis depends on Ser226, which acts as the Proton donor. Glu296 is an active-site residue.

Belongs to the MurB family. FAD is required as a cofactor.

The protein localises to the cytoplasm. The catalysed reaction is UDP-N-acetyl-alpha-D-muramate + NADP(+) = UDP-N-acetyl-3-O-(1-carboxyvinyl)-alpha-D-glucosamine + NADPH + H(+). The protein operates within cell wall biogenesis; peptidoglycan biosynthesis. Cell wall formation. The chain is UDP-N-acetylenolpyruvoylglucosamine reductase from Staphylococcus aureus (strain MRSA252).